Reading from the N-terminus, the 260-residue chain is ATP synthase subunit a (260 aa).

Helical transmembrane passes span 30 to 50 (IAFTNSALWMAITTAVLIVFV), 96 to 116 (LFAFILFANMLGLLPLALVGV), 125 to 145 (FTVTGVLAIMSFAIVLGVGFA), 151 to 171 (FFSLFVPHGTPVPMIPIIFPI), 187 to 207 (LFVAMMAGHVLLEVLSGFVIS), 213 to 233 (VGTFFLAAVPSFLLMIGICAL), and 234 to 254 (ELLVAGIQAYVFALLTCVYLN).

It belongs to the ATPase A chain family. F-type ATPases have 2 components, CF(1) - the catalytic core - and CF(0) - the membrane proton channel. CF(1) has five subunits: alpha(3), beta(3), gamma(1), delta(1), epsilon(1). CF(0) has three main subunits: a(1), b(2) and c(9-12). The alpha and beta chains form an alternating ring which encloses part of the gamma chain. CF(1) is attached to CF(0) by a central stalk formed by the gamma and epsilon chains, while a peripheral stalk is formed by the delta and b chains.

Its subcellular location is the cell inner membrane. In terms of biological role, key component of the proton channel; it plays a direct role in the translocation of protons across the membrane. The polypeptide is ATP synthase subunit a (Novosphingobium aromaticivorans (strain ATCC 700278 / DSM 12444 / CCUG 56034 / CIP 105152 / NBRC 16084 / F199)).